The chain runs to 170 residues: Endoribonuclease YbeY (170 aa).

Histidine 118, histidine 122, and histidine 128 together coordinate Zn(2+).

The protein belongs to the endoribonuclease YbeY family. Zn(2+) serves as cofactor.

It localises to the cytoplasm. Its function is as follows. Single strand-specific metallo-endoribonuclease involved in late-stage 70S ribosome quality control and in maturation of the 3' terminus of the 16S rRNA. The sequence is that of Endoribonuclease YbeY from Mycobacteroides abscessus (strain ATCC 19977 / DSM 44196 / CCUG 20993 / CIP 104536 / JCM 13569 / NCTC 13031 / TMC 1543 / L948) (Mycobacterium abscessus).